A 1167-amino-acid chain; its full sequence is Rhoptry neck protein 2-like protein 2 (1167 aa).

The first 20 residues, Met-1–Gly-20, serve as a signal peptide directing secretion. At Lys-21 to Lys-977 the chain is on the cytoplasmic side. Positions Gly-55–Ala-94 are disordered. The segment covering Met-68–Arg-77 has biased composition (basic and acidic residues). Residues Leu-978 to Leu-998 form a helical membrane-spanning segment. Residues Asp-999–Arg-1167 are Extracellular-facing. Cysteines 1015 and 1026 form a disulfide.

Belongs to the apicomplexan parasites RON2 family.

Its subcellular location is the secreted. The protein resides in the host cell membrane. May play a role in host cell invasion. The sequence is that of Rhoptry neck protein 2-like protein 2 (RON2L2) from Toxoplasma gondii (strain ATCC 50611 / Me49).